A 101-amino-acid chain; its full sequence is NADH-quinone oxidoreductase subunit K (101 aa).

Helical transmembrane passes span 4 to 24 (LSHY…GIFL), 30 to 50 (IILL…FVAF), and 61 to 81 (IFVF…LAIL).

This sequence belongs to the complex I subunit 4L family. As to quaternary structure, NDH-1 is composed of 14 different subunits. Subunits NuoA, H, J, K, L, M, N constitute the membrane sector of the complex.

The protein localises to the cell inner membrane. The enzyme catalyses a quinone + NADH + 5 H(+)(in) = a quinol + NAD(+) + 4 H(+)(out). Functionally, NDH-1 shuttles electrons from NADH, via FMN and iron-sulfur (Fe-S) centers, to quinones in the respiratory chain. The immediate electron acceptor for the enzyme in this species is believed to be ubiquinone. Couples the redox reaction to proton translocation (for every two electrons transferred, four hydrogen ions are translocated across the cytoplasmic membrane), and thus conserves the redox energy in a proton gradient. The protein is NADH-quinone oxidoreductase subunit K of Nitrosomonas eutropha (strain DSM 101675 / C91 / Nm57).